The chain runs to 159 residues: Transcriptional repressor NrdR (159 aa).

A zinc finger spans residues Cys3–Cys34. The ATP-cone domain occupies Leu49–Val139.

This sequence belongs to the NrdR family. It depends on Zn(2+) as a cofactor.

Its function is as follows. Negatively regulates transcription of bacterial ribonucleotide reductase nrd genes and operons by binding to NrdR-boxes. This chain is Transcriptional repressor NrdR, found in Brevibacillus brevis (strain 47 / JCM 6285 / NBRC 100599).